The sequence spans 176 residues: Inorganic pyrophosphatase (176 aa).

Residues Lys30, Arg44, and Tyr56 each coordinate substrate. The Mg(2+) site is built by Asp66, Asp71, and Asp103. Tyr142 lines the substrate pocket.

This sequence belongs to the PPase family. As to quaternary structure, homohexamer. Mg(2+) serves as cofactor.

Its subcellular location is the cytoplasm. It catalyses the reaction diphosphate + H2O = 2 phosphate + H(+). Its function is as follows. Catalyzes the hydrolysis of inorganic pyrophosphate (PPi) forming two phosphate ions. The polypeptide is Inorganic pyrophosphatase (Brucella melitensis biotype 1 (strain ATCC 23456 / CCUG 17765 / NCTC 10094 / 16M)).